The following is a 437-amino-acid chain: 3-phosphoshikimate 1-carboxyvinyltransferase (437 aa).

3-phosphoshikimate is bound by residues Lys21, Ser22, and Arg26. Lys21 contacts phosphoenolpyruvate. 2 residues coordinate phosphoenolpyruvate: Gly101 and Arg129. Ser172, Ser173, Gln174, Ser200, Asp314, and Lys341 together coordinate 3-phosphoshikimate. Gln174 lines the phosphoenolpyruvate pocket. Catalysis depends on Asp314, which acts as the Proton acceptor. Positions 345, 388, and 414 each coordinate phosphoenolpyruvate.

The protein belongs to the EPSP synthase family. Monomer.

Its subcellular location is the cytoplasm. It catalyses the reaction 3-phosphoshikimate + phosphoenolpyruvate = 5-O-(1-carboxyvinyl)-3-phosphoshikimate + phosphate. It participates in metabolic intermediate biosynthesis; chorismate biosynthesis; chorismate from D-erythrose 4-phosphate and phosphoenolpyruvate: step 6/7. Its function is as follows. Catalyzes the transfer of the enolpyruvyl moiety of phosphoenolpyruvate (PEP) to the 5-hydroxyl of shikimate-3-phosphate (S3P) to produce enolpyruvyl shikimate-3-phosphate and inorganic phosphate. In Clostridioides difficile (strain 630) (Peptoclostridium difficile), this protein is 3-phosphoshikimate 1-carboxyvinyltransferase.